The primary structure comprises 334 residues: uncharacterized protein (334 aa).

The next 2 helical transmembrane spans lie at 19 to 39 (AFLRVIGLCGLFSVIAISFGI) and 55 to 75 (LIVLGSVVLFLAFVIHFAALF). The interval 308–334 (KPESKSSSQKSVETEIEKEVKDKLAKN) is disordered. Residues 319–334 (VETEIEKEVKDKLAKN) show a composition bias toward basic and acidic residues.

It localises to the cell membrane. This is an uncharacterized protein from Mycoplasma genitalium (strain ATCC 33530 / DSM 19775 / NCTC 10195 / G37) (Mycoplasmoides genitalium).